The sequence spans 258 residues: Hydroxypyruvate isomerase (258 aa).

Catalysis depends on proton donor/acceptor residues Glu-143 and Glu-240.

The protein belongs to the hyi family. Homodimer.

The catalysed reaction is 3-hydroxypyruvate = 2-hydroxy-3-oxopropanoate. With respect to regulation, not stimulated by addition of pyridoxal 5'-phosphate (0.1 mM), FAD, NAD(+), NADP(+) or ATP (1 mM each). EDTA (10 mM) and metal ions (1 mM) such as Ca(2+), Co(2+), Mg(2+), Ni(2+), Zn(2+) do not affect the enzyme activity. Functionally, catalyzes the reversible isomerization between hydroxypyruvate and 2-hydroxy-3-oxopropanoate (also termed tartronate semialdehyde). Does not catalyze the isomerization of D-fructose to D-glucose or that of D-xylulose to D-xylose. Also does not catalyze racemization of serine, alanine, glycerate or lactate. The protein is Hydroxypyruvate isomerase (hyi) of Escherichia coli (strain K12).